Here is a 100-residue protein sequence, read N- to C-terminus: Class II hydrophobin FOXG_02746 (100 aa).

The signal sequence occupies residues 1–17 (MQFYTIVSLFLAGTAYA). 4 cysteine pairs are disulfide-bonded: Cys29-Cys79, Cys40-Cys70, Cys41-Cys53, and Cys80-Cys92.

Belongs to the cerato-ulmin hydrophobin family. Homodimer. Homodimers further self-assemble to form highly ordered films at water-air interfaces through intermolecular interactions.

It is found in the secreted. The protein localises to the cell wall. Functionally, aerial growth, conidiation, and dispersal of filamentous fungi in the environment rely upon a capability of their secreting small amphipathic proteins called hydrophobins (HPBs) with low sequence identity. Class I can self-assemble into an outermost layer of rodlet bundles on aerial cell surfaces, conferring cellular hydrophobicity that supports fungal growth, development and dispersal; whereas Class II form highly ordered films at water-air interfaces through intermolecular interactions but contribute nothing to the rodlet structure. FOXG_02746 is a class II hydrophobin that is likely required for plant colonization. This chain is Class II hydrophobin FOXG_02746, found in Fusarium oxysporum f. sp. lycopersici (strain 4287 / CBS 123668 / FGSC 9935 / NRRL 34936) (Fusarium vascular wilt of tomato).